A 314-amino-acid chain; its full sequence is Small ribosomal subunit protein uS11m (314 aa).

The transit peptide at 1–37 (MNGVSRHLRASSLLSLIRSYGGINSVCRFSSQSDGFS) directs the protein to the mitochondrion. The interval 34 to 138 (DGFSGGRFRE…GSGFSAPSLS (105 aa)) is disordered. The span at 50–63 (ESANNSGLSNTGRI) shows a compositional bias: polar residues. Residues 103–114 (SSLRSRLPNSLP) are compositionally biased toward low complexity.

Belongs to the universal ribosomal protein uS11 family. Component of the mitochondrial ribosome small subunit (28S) which comprises a 12S rRNA and about 30 distinct proteins.

Its subcellular location is the mitochondrion. Functionally, required for karyogamy during female gametophyte development, when the two polar nuclei fuse to form the diploid central cell nucleus. This is Small ribosomal subunit protein uS11m from Arabidopsis thaliana (Mouse-ear cress).